The primary structure comprises 30 residues: Thylakoid lumenal 13.3 kDa protein (30 aa).

Its subcellular location is the plastid. It localises to the chloroplast thylakoid lumen. In Spinacia oleracea (Spinach), this protein is Thylakoid lumenal 13.3 kDa protein.